The sequence spans 182 residues: Large ribosomal subunit protein uL10 (182 aa).

The protein belongs to the universal ribosomal protein uL10 family. Part of the ribosomal stalk of the 50S ribosomal subunit. The N-terminus interacts with L11 and the large rRNA to form the base of the stalk. The C-terminus forms an elongated spine to which L12 dimers bind in a sequential fashion forming a multimeric L10(L12)X complex.

Functionally, forms part of the ribosomal stalk, playing a central role in the interaction of the ribosome with GTP-bound translation factors. This Koribacter versatilis (strain Ellin345) protein is Large ribosomal subunit protein uL10.